The primary structure comprises 331 residues: Ornithine carbamoyltransferase (331 aa).

Carbamoyl phosphate-binding positions include 55–58, Gln82, Arg106, and 133–136; these read STRT and HPTQ. L-ornithine is bound by residues Asn166, Asp230, and 234–235; that span reads SM. Residues 272–273 and Arg317 contribute to the carbamoyl phosphate site; that span reads CL.

This sequence belongs to the aspartate/ornithine carbamoyltransferase superfamily. OTCase family.

Its subcellular location is the cytoplasm. It catalyses the reaction carbamoyl phosphate + L-ornithine = L-citrulline + phosphate + H(+). It functions in the pathway amino-acid biosynthesis; L-arginine biosynthesis; L-arginine from L-ornithine and carbamoyl phosphate: step 1/3. Functionally, reversibly catalyzes the transfer of the carbamoyl group from carbamoyl phosphate (CP) to the N(epsilon) atom of ornithine (ORN) to produce L-citrulline. In Neisseria gonorrhoeae, this protein is Ornithine carbamoyltransferase (argF).